The following is a 198-amino-acid chain: Large ribosomal subunit protein bL25 (198 aa).

The protein belongs to the bacterial ribosomal protein bL25 family. CTC subfamily. Part of the 50S ribosomal subunit; part of the 5S rRNA/L5/L18/L25 subcomplex. Contacts the 5S rRNA. Binds to the 5S rRNA independently of L5 and L18.

Its function is as follows. This is one of the proteins that binds to the 5S RNA in the ribosome where it forms part of the central protuberance. In Pseudomonas putida (strain W619), this protein is Large ribosomal subunit protein bL25.